The chain runs to 369 residues: Uroporphyrinogen decarboxylase (369 aa).

Substrate is bound by residues 28–32 (RQAGR), aspartate 78, tyrosine 154, serine 209, and histidine 339.

This sequence belongs to the uroporphyrinogen decarboxylase family. As to quaternary structure, homodimer.

Its subcellular location is the cytoplasm. It carries out the reaction uroporphyrinogen III + 4 H(+) = coproporphyrinogen III + 4 CO2. The protein operates within porphyrin-containing compound metabolism; protoporphyrin-IX biosynthesis; coproporphyrinogen-III from 5-aminolevulinate: step 4/4. Its function is as follows. Catalyzes the decarboxylation of four acetate groups of uroporphyrinogen-III to yield coproporphyrinogen-III. This chain is Uroporphyrinogen decarboxylase, found in Polaromonas naphthalenivorans (strain CJ2).